The sequence spans 576 residues: MPALATGSACDMGLYELLAALPAQLQPHVDSQEDLTFLWDVFGEKSLHSLVKIHEKLHCYEKQNPLPILHGAAALADDLTEELQNKLPNSEIRELLKLLSKPNVKALLSVHDTVAQKSYDPVLPPVPDDIDDEEDSVKIIRLVKNSEPLGATIKKDEQTGAITVARIMRGGAADRSGLIHVGDELREVNGIPVEDKRPEEIIKILSQSKGAITFKIIPSTKEETPSKEGKIFIKALFDYDPKEDKAIPCKEAGLSFRKGDILQIMSQDDVTWWQAKHEGDANPRAGLIPSKHFQERRLALRRPEIVVQPLKLSNTKSSGFRRSFRLSRKNKKINKSMYECKKSEQYDTADVPTYEEVTPYRRQIHDKYRLIVLVGPVGVGLNELKRKLLMSDAQHYGVIVPHTTRARRSQESDGVEYIFISKHLFETDVQINKFIEYGEYKNNYYGTSIDSVRSVLAKNKVCLLDVQPHTVKHLRTLEFKPYVIFIKPPSIERLRETRKNAKIISSRDDQGTAKPFTEEDFQEMIKSAQIMESQYGHLFDKIIINDDLTVAFNELKTTFDKLETDTHWVPVSWLHS.

L27 domains follow at residues Cys10–Asn64 and Pro65–Val122. In terms of domain architecture, PDZ spans Ile139–Thr220. The region spanning Glu228–Leu298 is the SH3 domain. A phospho-regulated basic and hydrophobic (PRBH) motif region spans residues Pro289–Glu383. One can recognise a Guanylate kinase-like domain in the interval Tyr368–Asp560. Ser409 bears the Phosphoserine mark.

The protein belongs to the MAGUK family. Heterodimer; able to heterodimerize via its C-terminal L27 domain with LIN7A, LIN7B and LIN7C. Forms a tripartite complex composed of DLG1, MPP7 and LIN7 (LIN7A or LIN7C). Interacts with DLG1 via its N-terminal L27 domain. Interacts with PALS1 and PATJ. In terms of processing, phosphorylated by aPKC which promotes dissociation from the cell cortex.

It localises to the membrane. The protein localises to the lateral cell membrane. Its subcellular location is the cell junction. The protein resides in the tight junction. It is found in the adherens junction. It localises to the cytoplasm. The protein localises to the cell cortex. Functionally, acts as an important adapter that promotes epithelial cell polarity and tight junction formation via its interaction with DLG1. Involved in the assembly of protein complexes at sites of cell-cell contact. This Mus musculus (Mouse) protein is MAGUK p55 subfamily member 7 (Mpp7).